Reading from the N-terminus, the 341-residue chain is Ribonucleoside-diphosphate reductase subunit beta (341 aa).

Positions 89, 120, and 123 each coordinate Fe cation. The active site involves Tyr-127. Residues Glu-185, Glu-219, and His-222 each coordinate Fe cation.

The protein belongs to the ribonucleoside diphosphate reductase small chain family. Tetramer of two alpha and two beta subunits. Fe cation is required as a cofactor.

The enzyme catalyses a 2'-deoxyribonucleoside 5'-diphosphate + [thioredoxin]-disulfide + H2O = a ribonucleoside 5'-diphosphate + [thioredoxin]-dithiol. Functionally, provides the precursors necessary for DNA synthesis. Catalyzes the biosynthesis of deoxyribonucleotides from the corresponding ribonucleotides. The sequence is that of Ribonucleoside-diphosphate reductase subunit beta (nrdB) from Helicobacter pylori (strain J99 / ATCC 700824) (Campylobacter pylori J99).